The following is a 418-amino-acid chain: Hydroxysteroid dehydrogenase-like protein 2 (418 aa).

NADP(+) contacts are provided by residues 17–23, lysine 42, and aspartate 74; that span reads GASRGIG. Lysine 42 bears the N6-(2-hydroxyisobutyryl)lysine mark. Lysine 116 bears the N6-acetyllysine mark. The active-site Proton acceptor is the tyrosine 168. Lysine 172 lines the NADP(+) pocket. The interval 287-310 is disordered; it reads STGAVPEFKEEKPQPQPKPRSGAV. An SCP2 domain is found at 306–415; sequence RSGAVEETFR…KLEKLMNQMN (110 aa). N6-succinyllysine is present on lysine 318.

Belongs to the short-chain dehydrogenases/reductases (SDR) family.

It localises to the peroxisome. The protein resides in the mitochondrion. In terms of biological role, has apparently no steroid dehydrogenase activity. Controls bile acid (BA) and lipid metabolism in response to nutritional cues. This is Hydroxysteroid dehydrogenase-like protein 2 (HSDL2) from Pongo abelii (Sumatran orangutan).